The sequence spans 217 residues: Probable GTP-binding protein EngB (217 aa).

Residues 44 to 217 enclose the EngB-type G domain; it reads DRIEVCFAGR…TLRTIVATLG (174 aa). GTP is bound by residues 52–59, 79–83, 97–100, 164–167, and 198–200; these read GRSNVGKS, GRTQE, DLPG, TKAD, and TSS. 2 residues coordinate Mg(2+): S59 and T81.

The protein belongs to the TRAFAC class TrmE-Era-EngA-EngB-Septin-like GTPase superfamily. EngB GTPase family. The cofactor is Mg(2+).

Its function is as follows. Necessary for normal cell division and for the maintenance of normal septation. The protein is Probable GTP-binding protein EngB of Cereibacter sphaeroides (strain ATCC 17023 / DSM 158 / JCM 6121 / CCUG 31486 / LMG 2827 / NBRC 12203 / NCIMB 8253 / ATH 2.4.1.) (Rhodobacter sphaeroides).